Here is a 279-residue protein sequence, read N- to C-terminus: uncharacterized protein (279 aa).

This is an uncharacterized protein from Caenorhabditis elegans.